A 140-amino-acid chain; its full sequence is Nucleoside diphosphate kinase (140 aa).

Lys11, Phe59, Arg87, Thr93, Arg104, and Asn114 together coordinate ATP. Residue His117 is the Pros-phosphohistidine intermediate of the active site.

The protein belongs to the NDK family. As to quaternary structure, homotetramer. Mg(2+) serves as cofactor.

The protein resides in the cytoplasm. It carries out the reaction a 2'-deoxyribonucleoside 5'-diphosphate + ATP = a 2'-deoxyribonucleoside 5'-triphosphate + ADP. The enzyme catalyses a ribonucleoside 5'-diphosphate + ATP = a ribonucleoside 5'-triphosphate + ADP. Its function is as follows. Major role in the synthesis of nucleoside triphosphates other than ATP. The ATP gamma phosphate is transferred to the NDP beta phosphate via a ping-pong mechanism, using a phosphorylated active-site intermediate. The chain is Nucleoside diphosphate kinase from Xanthobacter autotrophicus (strain ATCC BAA-1158 / Py2).